Here is a 309-residue protein sequence, read N- to C-terminus: MKSWNNTIILEFLLLGISEEPELQAFLFGLFLSMYLVTVLGNLLIILATISDSHLHTPMYFFLSNLSFVDICFVSTTVPKMLVNIQTHNKVITYAGCITQMCFFLLFVGLDNFLLTVMAYDRFVAICHPLHYMVIMNPQLCGLLVLASWIMSVLNSMLQSLMVLPLPFCTHMEIPHFFCEINQVVHLACSDTFLNDIVMYFAVALLGGGPLTGILYSYSKIVSSIRAISSAQGKYKAFSTCASHLSVVSLFYGTCLGVYLSSAATHNSHTGAAASVMYTVVTPMLNPFIYSLRNKHIKGAMKTFFRGKQ.

The Extracellular portion of the chain corresponds to 1–25 (MKSWNNTIILEFLLLGISEEPELQA). The N-linked (GlcNAc...) asparagine glycan is linked to Asn5. A helical transmembrane segment spans residues 26-46 (FLFGLFLSMYLVTVLGNLLII). Residues 47–54 (LATISDSH) are Cytoplasmic-facing. Residues 55-75 (LHTPMYFFLSNLSFVDICFVS) form a helical membrane-spanning segment. Over 76–99 (TTVPKMLVNIQTHNKVITYAGCIT) the chain is Extracellular. A disulfide bridge links Cys97 with Cys189. The chain crosses the membrane as a helical span at residues 100 to 120 (QMCFFLLFVGLDNFLLTVMAY). Topologically, residues 121 to 139 (DRFVAICHPLHYMVIMNPQ) are cytoplasmic. The helical transmembrane segment at 140-160 (LCGLLVLASWIMSVLNSMLQS) threads the bilayer. Topologically, residues 161–197 (LMVLPLPFCTHMEIPHFFCEINQVVHLACSDTFLNDI) are extracellular. The chain crosses the membrane as a helical span at residues 198–217 (VMYFAVALLGGGPLTGILYS). Residues 218–237 (YSKIVSSIRAISSAQGKYKA) are Cytoplasmic-facing. The helical transmembrane segment at 238–258 (FSTCASHLSVVSLFYGTCLGV) threads the bilayer. Residues 259–271 (YLSSAATHNSHTG) lie on the Extracellular side of the membrane. A helical membrane pass occupies residues 272–292 (AAASVMYTVVTPMLNPFIYSL). Topologically, residues 293-309 (RNKHIKGAMKTFFRGKQ) are cytoplasmic.

The protein belongs to the G-protein coupled receptor 1 family.

The protein localises to the cell membrane. In terms of biological role, odorant receptor. The polypeptide is Olfactory receptor 7A10 (OR7A10) (Homo sapiens (Human)).